The following is an 81-amino-acid chain: Saposin-C (81 aa).

One can recognise a Saposin B-type domain in the interval 1-81 (ESVTCKACEY…CSELGLCMSG (81 aa)). Cystine bridges form between C5–C78, C8–C72, and C36–C47. Residue N22 is glycosylated (N-linked (GlcNAc...) asparagine).

Its function is as follows. Saposin-A and saposin-C stimulate the hydrolysis of glucosylceramide by beta-glucosylceramidase (EC 3.2.1.45) and galactosylceramide by beta-galactosylceramidase (EC 3.2.1.46). Saposin-C apparently acts by combining with the enzyme and acidic lipid to form an activated complex, rather than by solubilizing the substrate. This Cavia porcellus (Guinea pig) protein is Saposin-C (PSAP).